The following is a 1059-amino-acid chain: Carbamoyl phosphate synthase large chain (1059 aa).

The segment at 1-401 is carboxyphosphate synthetic domain; it reads MPKRSDIKKI…SLLKACRSLE (401 aa). 12 residues coordinate ATP: Arg129, Arg169, Gly175, Gly176, Arg208, Ile210, Glu215, Gly241, Ile242, His243, Gln284, and Glu298. The 195-residue stretch at 133–327 folds into the ATP-grasp 1 domain; sequence KQLMEELEQP…IAKLAAKIAV (195 aa). Mg(2+)-binding residues include Gln284, Glu298, and Asn300. Mn(2+)-binding residues include Gln284, Glu298, and Asn300. Positions 402-546 are oligomerization domain; it reads IGVYHNEMSE…YSTYEWENES (145 aa). Residues 547-929 are carbamoyl phosphate synthetic domain; that stretch reads IKSDKESVIV…ALYKAFEASY (383 aa). Positions 671 to 861 constitute an ATP-grasp 2 domain; the sequence is EQALKDLDIP…MAQVATNLIL (191 aa). ATP contacts are provided by Arg707, Ser746, Ile748, Glu752, Gly777, Val778, His779, Ser780, Gln820, and Glu832. Mg(2+)-binding residues include Gln820, Glu832, and Asn834. Residues Gln820, Glu832, and Asn834 each contribute to the Mn(2+) site. One can recognise an MGS-like domain in the interval 930–1059; that stretch reads LHLPTFGNVI…ESRSFTTEAI (130 aa). An allosteric domain region spans residues 930–1059; sequence LHLPTFGNVI…ESRSFTTEAI (130 aa).

This sequence belongs to the CarB family. As to quaternary structure, composed of two chains; the small (or glutamine) chain promotes the hydrolysis of glutamine to ammonia, which is used by the large (or ammonia) chain to synthesize carbamoyl phosphate. Tetramer of heterodimers (alpha,beta)4. Mg(2+) is required as a cofactor. It depends on Mn(2+) as a cofactor.

It catalyses the reaction hydrogencarbonate + L-glutamine + 2 ATP + H2O = carbamoyl phosphate + L-glutamate + 2 ADP + phosphate + 2 H(+). The enzyme catalyses hydrogencarbonate + NH4(+) + 2 ATP = carbamoyl phosphate + 2 ADP + phosphate + 2 H(+). Its pathway is amino-acid biosynthesis; L-arginine biosynthesis; carbamoyl phosphate from bicarbonate: step 1/1. It participates in pyrimidine metabolism; UMP biosynthesis via de novo pathway; (S)-dihydroorotate from bicarbonate: step 1/3. In terms of biological role, large subunit of the glutamine-dependent carbamoyl phosphate synthetase (CPSase). CPSase catalyzes the formation of carbamoyl phosphate from the ammonia moiety of glutamine, carbonate, and phosphate donated by ATP, constituting the first step of 2 biosynthetic pathways, one leading to arginine and/or urea and the other to pyrimidine nucleotides. The large subunit (synthetase) binds the substrates ammonia (free or transferred from glutamine from the small subunit), hydrogencarbonate and ATP and carries out an ATP-coupled ligase reaction, activating hydrogencarbonate by forming carboxy phosphate which reacts with ammonia to form carbamoyl phosphate. The sequence is that of Carbamoyl phosphate synthase large chain from Streptococcus thermophilus (strain ATCC BAA-250 / LMG 18311).